Here is a 462-residue protein sequence, read N- to C-terminus: Glutamate--tRNA ligase 1 (462 aa).

A 'HIGH' region motif is present at residues 8 to 18; the sequence is PSPTGYLHIGG. Residues 237–241 carry the 'KMSKS' region motif; it reads KLSKR. K240 provides a ligand contact to ATP.

This sequence belongs to the class-I aminoacyl-tRNA synthetase family. Glutamate--tRNA ligase type 1 subfamily. Monomer.

It localises to the cytoplasm. It catalyses the reaction tRNA(Glu) + L-glutamate + ATP = L-glutamyl-tRNA(Glu) + AMP + diphosphate. Catalyzes the attachment of glutamate to tRNA(Glu) in a two-step reaction: glutamate is first activated by ATP to form Glu-AMP and then transferred to the acceptor end of tRNA(Glu). The sequence is that of Glutamate--tRNA ligase 1 from Campylobacter hominis (strain ATCC BAA-381 / DSM 21671 / CCUG 45161 / LMG 19568 / NCTC 13146 / CH001A).